The chain runs to 70 residues: Probable rubredoxin HupI (70 aa).

The Rubredoxin-like domain maps to 15 to 66; sequence DDRMECGICWHVYDPAEGDPVWQIPPGTPFSNLTEDWRCPNCDALQSKFMRL. Cys-20, Cys-23, Cys-53, and Cys-56 together coordinate Fe cation.

This sequence belongs to the rubredoxin family. Fe(3+) serves as cofactor.

Its function is as follows. Could be an electron transport intermediate in hydrogen oxidation. This Rhizobium leguminosarum bv. viciae protein is Probable rubredoxin HupI (hupI).